The chain runs to 278 residues: Putative phosphatase MG265 (278 aa).

The active-site Nucleophile is the Asp-9. Asp-9 serves as a coordination point for Mg(2+). Phosphate is bound at residue Leu-10. A Mg(2+)-binding site is contributed by Asp-11. Residues Ser-43–Gly-44 and Lys-204 each bind phosphate. Residue Asp-227 coordinates Mg(2+). Asn-230 is a phosphate binding site.

It belongs to the HAD-like hydrolase superfamily. Cof family. Mg(2+) is required as a cofactor.

In Mycoplasma genitalium (strain ATCC 33530 / DSM 19775 / NCTC 10195 / G37) (Mycoplasmoides genitalium), this protein is Putative phosphatase MG265.